A 414-amino-acid chain; its full sequence is Probable acetyl-CoA acetyltransferase (414 aa).

The Acyl-thioester intermediate role is filled by C110. CoA-binding positions include Y205, 244-246 (KVL), and K249. Residue Y205 coordinates K(+). A266 and A268 together coordinate K(+). S269 provides a ligand contact to CoA. K(+) is bound at residue V366. Catalysis depends on proton acceptor residues H370 and C400.

This sequence belongs to the thiolase-like superfamily. Thiolase family.

The enzyme catalyses 2 acetyl-CoA = acetoacetyl-CoA + CoA. The protein is Probable acetyl-CoA acetyltransferase of Dictyostelium discoideum (Social amoeba).